The following is a 182-amino-acid chain: Ribosome maturation factor RimM (182 aa).

One can recognise a PRC barrel domain in the interval 102–182 (EEDDYYWKDL…RVEVDWDPGF (81 aa)).

Belongs to the RimM family. In terms of assembly, binds ribosomal protein uS19.

It is found in the cytoplasm. Its function is as follows. An accessory protein needed during the final step in the assembly of 30S ribosomal subunit, possibly for assembly of the head region. Essential for efficient processing of 16S rRNA. May be needed both before and after RbfA during the maturation of 16S rRNA. It has affinity for free ribosomal 30S subunits but not for 70S ribosomes. The protein is Ribosome maturation factor RimM of Yersinia pseudotuberculosis serotype IB (strain PB1/+).